Here is a 93-residue protein sequence, read N- to C-terminus: Small ribosomal subunit protein uS19 (93 aa).

Belongs to the universal ribosomal protein uS19 family.

In terms of biological role, protein S19 forms a complex with S13 that binds strongly to the 16S ribosomal RNA. The protein is Small ribosomal subunit protein uS19 of Lactobacillus helveticus (strain DPC 4571).